A 292-amino-acid chain; its full sequence is Homeobox-leucine zipper protein HOX19 (292 aa).

3 disordered regions span residues 14 to 85 (LALG…HSVS), 99 to 133 (RERAEEADGERVSSTAAGRDDDDDGSTRKKLRLTK), and 217 to 236 (FAPPPPSSAAHQPSPAPPAP). Over residues 28–74 (TDAAAAHRGGCRRPSPSSQCPPLEPSLTLSLPDDAAAGAAATATATA) the composition is skewed to low complexity. The segment covering 99 to 109 (RERAEEADGER) has biased composition (basic and acidic residues). Residues 124–183 (STRKKLRLTKEQSALLEDRFREHSTLNPKQKVALAKQLNLRPRQVEVWFQNRRARTKLKQ) constitute a DNA-binding region (homeobox). Residues 182-226 (KQTEVDCEFLKRCCETLTEENRRLQRELQELRALKFAPPPPSSAA) are leucine-zipper.

The protein belongs to the HD-ZIP homeobox family. Class II subfamily. In terms of tissue distribution, expressed in seedlings, roots, stems, leaf sheaths and blades and panicles.

The protein localises to the nucleus. In terms of biological role, probable transcription factor. The protein is Homeobox-leucine zipper protein HOX19 (HOX19) of Oryza sativa subsp. japonica (Rice).